We begin with the raw amino-acid sequence, 427 residues long: Light-independent protochlorophyllide reductase subunit N (427 aa).

[4Fe-4S] cluster-binding residues include cysteine 32, cysteine 57, and cysteine 118.

This sequence belongs to the BchN/ChlN family. As to quaternary structure, protochlorophyllide reductase is composed of three subunits; BchL, BchN and BchB. Forms a heterotetramer of two BchB and two BchN subunits. Requires [4Fe-4S] cluster as cofactor.

The catalysed reaction is chlorophyllide a + oxidized 2[4Fe-4S]-[ferredoxin] + 2 ADP + 2 phosphate = protochlorophyllide a + reduced 2[4Fe-4S]-[ferredoxin] + 2 ATP + 2 H2O. It participates in porphyrin-containing compound metabolism; bacteriochlorophyll biosynthesis (light-independent). Component of the dark-operative protochlorophyllide reductase (DPOR) that uses Mg-ATP and reduced ferredoxin to reduce ring D of protochlorophyllide (Pchlide) to form chlorophyllide a (Chlide). This reaction is light-independent. The NB-protein (BchN-BchB) is the catalytic component of the complex. This Rubrivivax gelatinosus (strain NBRC 100245 / IL144) protein is Light-independent protochlorophyllide reductase subunit N.